We begin with the raw amino-acid sequence, 333 residues long: tRNA(Ile)-lysidine synthase (333 aa).

33–38 is a binding site for ATP; that stretch reads SGGADS.

Belongs to the tRNA(Ile)-lysidine synthase family.

Its subcellular location is the cytoplasm. The enzyme catalyses cytidine(34) in tRNA(Ile2) + L-lysine + ATP = lysidine(34) in tRNA(Ile2) + AMP + diphosphate + H(+). Functionally, ligates lysine onto the cytidine present at position 34 of the AUA codon-specific tRNA(Ile) that contains the anticodon CAU, in an ATP-dependent manner. Cytidine is converted to lysidine, thus changing the amino acid specificity of the tRNA from methionine to isoleucine. This is tRNA(Ile)-lysidine synthase from Salinispora tropica (strain ATCC BAA-916 / DSM 44818 / JCM 13857 / NBRC 105044 / CNB-440).